Reading from the N-terminus, the 491-residue chain is Serine/threonine-protein phosphatase 2A regulatory subunit B'' subunit delta (491 aa).

One can recognise an EF-hand domain in the interval 331–366 (TTPTSTEYWFRCMDLDGDGALSMFELEFFYEEQAQR). Ca(2+) contacts are provided by D344, D346, D348, and E355. Composition is skewed to acidic residues over residues 460 to 473 (AMAE…EGSD) and 481 to 491 (ADEDCDDLEPL). A disordered region spans residues 460–491 (AMAEDDDDHDEGSDPIDLYGLADEDCDDLEPL).

PP2A consists of a common heterodimeric core enzyme, composed of a 36 kDa catalytic subunit (subunit C) and a 65 kDa constant regulatory subunit (PR65 or subunit A), that associates with a variety of regulatory subunits. Proteins that associate with the core dimer include three families of regulatory subunits B (the R2/B/PR55/B55, R3/B''/PR72/PR130/PR59 and R5/B'/B56 families), the 48 kDa variable regulatory subunit, viral proteins, and cell signaling molecules. Expressed in testis, kidney, liver, lung, spleen, brain and heart.

In terms of biological role, the B regulatory subunit might modulate substrate selectivity and catalytic activity, and might also direct the localization of the catalytic enzyme to a particular subcellular compartment. Interacts with retinoblastoma-related protein p107 (in vivo). May target PP2A core dimer to p107 resulting in dephosphorylation of p107. This is Serine/threonine-protein phosphatase 2A regulatory subunit B'' subunit delta (Ppp2r3d) from Mus musculus (Mouse).